The sequence spans 542 residues: Tubby-related protein 1 (542 aa).

The segment at M1 to D289 is disordered. A compositionally biased stretch (basic and acidic residues) spans F91–E104. A compositionally biased stretch (acidic residues) spans A114–A132. Over residues P146–E157 the composition is skewed to basic and acidic residues. Residues S262–K275 are compositionally biased toward basic residues.

It belongs to the TUB family. As to quaternary structure, homodimer. May interact with ABCF1, PSIP1, ZEB1 and HMGB2 (Potential). Interacts with DNM1. Interacts with F-actin. Interacts with TUB. Interacts with TYRO3. As to expression, retina-specific.

It localises to the cytoplasm. The protein localises to the cell membrane. Its subcellular location is the secreted. The protein resides in the synapse. Its function is as follows. Required for normal development of photoreceptor synapses. Required for normal photoreceptor function and for long-term survival of photoreceptor cells. Interacts with cytoskeleton proteins and may play a role in protein transport in photoreceptor cells. Binds lipids, especially phosphatidylinositol 3-phosphate, phosphatidylinositol 4-phosphate, phosphatidylinositol 5-phosphate, phosphatidylinositol 3,4-bisphosphate, phosphatidylinositol 4,5-bisphosphate, phosphatidylinositol 3,4,5-bisphosphate, phosphatidylserine and phosphatidic acid (in vitro). Contribute to stimulation of phagocytosis of apoptotic retinal pigment epithelium (RPE) cells and macrophages. In Homo sapiens (Human), this protein is Tubby-related protein 1 (TULP1).